A 51-amino-acid chain; its full sequence is Sperm protamine P1 (51 aa).

A compositionally biased stretch (low complexity) spans 1–13 (MARYRCCRSQSRS). The interval 1 to 30 (MARYRCCRSQSRSRYYRQRQRSRRRRRRSC) is disordered. The segment covering 14-30 (RYYRQRQRSRRRRRRSC) has biased composition (basic residues). A disulfide bridge connects residues Cys-40 and Cys-48.

The protein belongs to the protamine P1 family. Cross-linked by interchain disulfide bonds around the DNA-helix. Post-translationally, phosphorylated by SRPK1. As to expression, testis.

It localises to the nucleus. The protein localises to the chromosome. In terms of biological role, protamines substitute for histones in the chromatin of sperm during the haploid phase of spermatogenesis. They compact sperm DNA into a highly condensed, stable and inactive complex. The polypeptide is Sperm protamine P1 (PRM1) (Homo sapiens (Human)).